We begin with the raw amino-acid sequence, 215 residues long: Nascent polypeptide-associated complex subunit alpha (215 aa).

The tract at residues 1–81 is disordered; it reads MPGEATETVP…SEKKARKAMS (81 aa). The span at 9 to 28 shows a compositional bias: polar residues; sequence VPATEQELPQPQAETGSGTE. The span at 29–42 shows a compositional bias: acidic residues; the sequence is SDSDESVPELEEQD. Position 43 is a phosphoserine; by ILK1 (S43). The segment covering 44–57 has biased composition (low complexity); sequence TQTATQQAQLAAAA. Residues 69-80 are required for DNA-binding; that stretch reads QSRSEKKARKAM. The 66-residue stretch at 70-135 folds into the NAC-A/B domain; the sequence is SRSEKKARKA…AKIEDLSQQA (66 aa). Positions 93-108 are RNA/DNA-binding; sequence RVTIRKSKNILFVITK. The residue at position 132 (S132) is a Phosphoserine. At K142 the chain carries N6-acetyllysine; alternate. Residue K142 forms a Glycyl lysine isopeptide (Lys-Gly) (interchain with G-Cter in SUMO2); alternate linkage. Phosphothreonine; by GSK3-beta is present on T159. T161 carries the phosphothreonine modification. Phosphoserine occurs at positions 166, 186, 191, and 203. In terms of domain architecture, UBA spans 176 to 213; that stretch reads VEVKDIELVMSQANVSRAKAVRALKNNSNDIVNAIMEL.

It belongs to the NAC-alpha family. Part of the nascent polypeptide-associated complex (NAC), which is a heterodimer of NACA and BTF3 (via NAC-A/B domains). NAC associates with ribosomes through the BTF3/NACB subunit and contacts the ribosomal protein L23, which is positioned near the exiting site. Both subunits can contact nascent polypeptide chains. NACA may also form homodimers, and only this form binds DNA. Interacts with TBP and JUN. Post-translationally, phosphorylation of Ser-43 by ILK during cell adhesion may promote nuclear localization. Phosphorylation of Thr-159 by GSK3B may promote proteasome mediated degradation. Isoform 1 appears to be ubiquitously expressed.

Its subcellular location is the cytoplasm. The protein localises to the nucleus. Prevents inappropriate targeting of non-secretory polypeptides to the endoplasmic reticulum (ER). Binds to nascent polypeptide chains as they emerge from the ribosome and blocks their interaction with the signal recognition particle (SRP), which normally targets nascent secretory peptides to the ER. Also reduces the inherent affinity of ribosomes for protein translocation sites in the ER membrane (M sites). Isoform 1 and isoform 2 appear to bind DNA and play roles in transcription. Isoform 1 may function as a specific coactivator for JUN, acting to stabilize the interaction of JUN homodimers with promoter elements. In Mus musculus (Mouse), this protein is Nascent polypeptide-associated complex subunit alpha (Naca).